Reading from the N-terminus, the 874-residue chain is Alanine--tRNA ligase (874 aa).

Zn(2+) is bound by residues His562, His566, Cys665, and His669.

It belongs to the class-II aminoacyl-tRNA synthetase family. Zn(2+) serves as cofactor.

The protein localises to the cytoplasm. It carries out the reaction tRNA(Ala) + L-alanine + ATP = L-alanyl-tRNA(Ala) + AMP + diphosphate. In terms of biological role, catalyzes the attachment of alanine to tRNA(Ala) in a two-step reaction: alanine is first activated by ATP to form Ala-AMP and then transferred to the acceptor end of tRNA(Ala). Also edits incorrectly charged Ser-tRNA(Ala) and Gly-tRNA(Ala) via its editing domain. This chain is Alanine--tRNA ligase, found in Pseudomonas entomophila (strain L48).